The following is a 126-amino-acid chain: Small ribosomal subunit protein uS12 (126 aa).

The tract at residues 1 to 23 (MPTISQLVRKGRKTVASKSTAPA) is disordered. A 3-methylthioaspartic acid modification is found at D89.

The protein belongs to the universal ribosomal protein uS12 family. In terms of assembly, part of the 30S ribosomal subunit. Contacts proteins S8 and S17. May interact with IF1 in the 30S initiation complex.

With S4 and S5 plays an important role in translational accuracy. Functionally, interacts with and stabilizes bases of the 16S rRNA that are involved in tRNA selection in the A site and with the mRNA backbone. Located at the interface of the 30S and 50S subunits, it traverses the body of the 30S subunit contacting proteins on the other side and probably holding the rRNA structure together. The combined cluster of proteins S8, S12 and S17 appears to hold together the shoulder and platform of the 30S subunit. The protein is Small ribosomal subunit protein uS12 of Clostridium perfringens (strain ATCC 13124 / DSM 756 / JCM 1290 / NCIMB 6125 / NCTC 8237 / Type A).